A 320-amino-acid polypeptide reads, in one-letter code: MQARLLIPILFSVFILSACGTLTGIPSHGGGKRFAVEQELVAASARAAVKDMDLQALHGRKVALYIATMGDQGSGSLTGGRYSIDALIRGEYINSPAVRTDYTYPRYETTAETTSGGLTGLTTSLSTLNAPALSRTQSDGSGSKSSLGLNIGGMGDYRNETLTTNPRDTAFLSHLVQTVFFLRGIDVVSPANADTDVFINIDVFGTIRNRTEMHLYNAETLKAQTKLEYFAVDRTNKKLLIKPKTNAFEAAYKENYALWMGPYKVSKGIKPTEGLMVDFSDIRPYGNHTGNSAPSVETDNSHEGYGYSDEVVRQHRQGQP.

Residues 1 to 18 (MQARLLIPILFSVFILSA) form the signal peptide. A lipid anchor (N-palmitoyl cysteine) is attached at C19. C19 carries S-diacylglycerol cysteine lipidation. Residues 288 to 298 (HTGNSAPSVET) show a composition bias toward polar residues. A disordered region spans residues 288–320 (HTGNSAPSVETDNSHEGYGYSDEVVRQHRQGQP).

Belongs to the MafA family.

The protein localises to the cell outer membrane. The sequence is that of Adhesin MafA 3 (mafA3) from Neisseria meningitidis serogroup C / serotype 2a (strain ATCC 700532 / DSM 15464 / FAM18).